We begin with the raw amino-acid sequence, 296 residues long: 4-hydroxy-tetrahydrodipicolinate synthase (296 aa).

Pyruvate is bound at residue threonine 49. Catalysis depends on tyrosine 137, which acts as the Proton donor/acceptor. Lysine 165 functions as the Schiff-base intermediate with substrate in the catalytic mechanism. Position 207 (valine 207) interacts with pyruvate.

This sequence belongs to the DapA family. In terms of assembly, homotetramer; dimer of dimers.

Its subcellular location is the cytoplasm. The catalysed reaction is L-aspartate 4-semialdehyde + pyruvate = (2S,4S)-4-hydroxy-2,3,4,5-tetrahydrodipicolinate + H2O + H(+). Its pathway is amino-acid biosynthesis; L-lysine biosynthesis via DAP pathway; (S)-tetrahydrodipicolinate from L-aspartate: step 3/4. Functionally, catalyzes the condensation of (S)-aspartate-beta-semialdehyde [(S)-ASA] and pyruvate to 4-hydroxy-tetrahydrodipicolinate (HTPA). This chain is 4-hydroxy-tetrahydrodipicolinate synthase, found in Nitrobacter hamburgensis (strain DSM 10229 / NCIMB 13809 / X14).